The primary structure comprises 663 residues: Shugoshin 1 (663 aa).

Coiled coils occupy residues 8-29 and 110-132; these read KQAF…RIKK and DTAE…NLLE. Disordered regions lie at residues 207–250, 278–401, and 417–478; these read RNTA…MNKN, EHTV…LNSG, and FRQN…ARKN. Basic and acidic residues-rich tracts occupy residues 231–242, 280–304, 339–358, and 366–394; these read RLEECNNEDKTE, TVVE…REID, KNKE…KAER, and KPWE…KEKM. The span at 427–437 shows a compositional bias: low complexity; the sequence is NESSLEISSSE. The segment covering 443-453 has biased composition (basic and acidic residues); sequence SLYKPYKDKSK.

This sequence belongs to the shugoshin family. As to quaternary structure, binds microtubules. In terms of processing, ubiquitinated by the anaphase promoting complex (APC) at the onset of anaphase, conducting to its degradation.

The protein localises to the nucleus. It is found in the chromosome. It localises to the centromere. Its subcellular location is the kinetochore. The protein resides in the nucleus speckle. Plays a central role in chromosome cohesion during mitosis by preventing premature dissociation of cohesin complex from centromeres after prophase, when most of cohesin complex dissociates from chromosomes arms. May act by preventing phosphorylation of the stag2 subunit of cohesin complex at the centromere, ensuring cohesin persistence at centromere until cohesin cleavage by espl1/separase at anaphase. May regulate kinetochore microtubule stability in mitosis, possibly to sense tension on mitotic chromosomes. In Xenopus laevis (African clawed frog), this protein is Shugoshin 1.